The primary structure comprises 376 residues: TraB domain-containing protein (376 aa).

The residue at position 1 (M1) is an N-acetylmethionine. Position 64 is a phosphothreonine (T64).

This is TraB domain-containing protein (Trabd) from Mus musculus (Mouse).